We begin with the raw amino-acid sequence, 122 residues long: Large ribosomal subunit protein uL14 (122 aa).

This sequence belongs to the universal ribosomal protein uL14 family. Part of the 50S ribosomal subunit. Forms a cluster with proteins L3 and L19. In the 70S ribosome, L14 and L19 interact and together make contacts with the 16S rRNA in bridges B5 and B8.

Functionally, binds to 23S rRNA. Forms part of two intersubunit bridges in the 70S ribosome. This Beutenbergia cavernae (strain ATCC BAA-8 / DSM 12333 / CCUG 43141 / JCM 11478 / NBRC 16432 / NCIMB 13614 / HKI 0122) protein is Large ribosomal subunit protein uL14.